The sequence spans 113 residues: Prefoldin subunit beta (113 aa).

The protein belongs to the prefoldin subunit beta family. As to quaternary structure, heterohexamer of two alpha and four beta subunits.

It localises to the cytoplasm. Functionally, molecular chaperone capable of stabilizing a range of proteins. Seems to fulfill an ATP-independent, HSP70-like function in archaeal de novo protein folding. The protein is Prefoldin subunit beta of Methanococcus maripaludis (strain DSM 14266 / JCM 13030 / NBRC 101832 / S2 / LL).